Consider the following 47-residue polypeptide: Photosystem II reaction center protein K (47 aa).

Residues 1–10 (MASFTLDLLA) constitute a propeptide that is removed on maturation. A helical transmembrane segment spans residues 19–39 (FSPLIDILPLIPVFFLLLAFV).

Belongs to the PsbK family. PSII is composed of 1 copy each of membrane proteins PsbA, PsbB, PsbC, PsbD, PsbE, PsbF, PsbH, PsbI, PsbJ, PsbK, PsbL, PsbM, PsbT, PsbX, PsbY, PsbZ, Psb30/Ycf12, peripheral proteins PsbO, CyanoQ (PsbQ), PsbU, PsbV and a large number of cofactors. It forms dimeric complexes.

Its subcellular location is the cellular thylakoid membrane. One of the components of the core complex of photosystem II (PSII). PSII is a light-driven water:plastoquinone oxidoreductase that uses light energy to abstract electrons from H(2)O, generating O(2) and a proton gradient subsequently used for ATP formation. It consists of a core antenna complex that captures photons, and an electron transfer chain that converts photonic excitation into a charge separation. The protein is Photosystem II reaction center protein K of Parasynechococcus marenigrum (strain WH8102).